The sequence spans 135 residues: Translation initiation factor 2 subunit beta (135 aa).

It belongs to the eIF-2-beta/eIF-5 family. Heterotrimer composed of an alpha, a beta and a gamma chain.

Functionally, eIF-2 functions in the early steps of protein synthesis by forming a ternary complex with GTP and initiator tRNA. The protein is Translation initiation factor 2 subunit beta (eif2b) of Methanothermobacter thermautotrophicus (strain ATCC 29096 / DSM 1053 / JCM 10044 / NBRC 100330 / Delta H) (Methanobacterium thermoautotrophicum).